The chain runs to 318 residues: Homoserine O-succinyltransferase (318 aa).

The Acyl-thioester intermediate role is filled by Cys142. Substrate is bound by residues Lys163 and Ser192. His235 acts as the Proton acceptor in catalysis. The active site involves Glu237. Arg249 contributes to the substrate binding site.

This sequence belongs to the MetA family.

The protein localises to the cytoplasm. It carries out the reaction L-homoserine + succinyl-CoA = O-succinyl-L-homoserine + CoA. It participates in amino-acid biosynthesis; L-methionine biosynthesis via de novo pathway; O-succinyl-L-homoserine from L-homoserine: step 1/1. Functionally, transfers a succinyl group from succinyl-CoA to L-homoserine, forming succinyl-L-homoserine. The sequence is that of Homoserine O-succinyltransferase from Shewanella putrefaciens (strain CN-32 / ATCC BAA-453).